Here is a 393-residue protein sequence, read N- to C-terminus: MGRLTSGVGTAALLVVAVGLRVVCAKYALADPSLKMADPNRFRGKNLPVLDRLTDPPGVKRVYHIQPSLEDPFQPPSIPITVYYAVLERACRSVLLHAPSEAPQIVRGASDEARKHTYNLTIAWYRMGDNCAIPITVMEYTECPYNKSLGVCPIRTQPRWSYYDSFSAVSEDNLGFLMHAPAFETAGTYLRLVKINDWTEITQFILEHRARASCKYALPLRIPPAACLTSKAYQQGVTVDSIGMLPRFIPENQRTVALYSLKIAGWHGPKPPYTSTLLPPELSDTTNATQPELVPEDPEDSALLEDPAGTVSSQIPPNWHIPSIQDVAPHHAPAAPSNPGLIIGALAGSTLAVLVIGGIAFWVRRRAQMAPKRLRLPHIRDDDAPPSHQPLFY.

Positions methionine 1 to alanine 25 are cleaved as a signal peptide. The segment at alanine 25–proline 57 is interaction with TNFRSF14. At lysine 26 to proline 339 the chain is on the virion surface side. Histidine 64 is a Zn(2+) binding site. Intrachain disulfides connect cysteine 91–cysteine 214, cysteine 131–cysteine 227, and cysteine 143–cysteine 152. Residues asparagine 119 and asparagine 146 are each glycosylated (N-linked (GlcNAc...) asparagine; by host). Aspartate 240 is a binding site for Zn(2+). The tract at residues leucine 261–glutamate 305 is profusion. The segment covering threonine 274–glutamine 290 has biased composition (polar residues). Residues threonine 274–serine 301 form a disordered region. The N-linked (GlcNAc...) asparagine; by host glycan is linked to asparagine 287. Residues glycine 340–valine 363 form a helical membrane-spanning segment. Topologically, residues arginine 364–tyrosine 393 are intravirion.

This sequence belongs to the herpesviridae glycoprotein D family. In terms of assembly, homodimer. Interacts with host receptor TNFRSF14. Interacts with host receptor NECTIN1. Interacts with host receptor NECTIN2. Interacts (via profusion domain) with gB; this interaction occurs in the absence of gH/gL. Interacts (via profusion domain) with gH/gL heterodimer; this interaction occurs in the absence of gB. Associates with the gB-gH/gL-gD complex. Interacts (via C-terminus) with UL11 tegument protein.

The protein localises to the virion membrane. Functionally, envelope glycoprotein that binds to the host cell entry receptors NECTIN1, NECTIN2 and TNFRSF14/HVEM, promoting the virus entry into host cells. May trigger fusion with host membrane, by recruiting the fusion machinery composed of gB and gH/gL. In Homo sapiens (Human), this protein is Envelope glycoprotein D (gD).